The chain runs to 116 residues: Putative UPF0320 protein YLL065W (116 aa).

Belongs to the UPF0320 family.

The sequence is that of Putative UPF0320 protein YLL065W from Saccharomyces cerevisiae (strain ATCC 204508 / S288c) (Baker's yeast).